Here is a 397-residue protein sequence, read N- to C-terminus: Succinate--CoA ligase [ADP-forming] subunit beta (397 aa).

The ATP-grasp domain occupies 9 to 254 (KALLRSYGAP…ETEEDPKELA (246 aa)). ATP contacts are provided by residues Lys46, 53 to 55 (GRG), Glu109, Ser112, and Glu117. Mg(2+) is bound by residues Asn209 and Asp223. Residues Asn274 and 331 to 333 (GIM) each bind substrate.

The protein belongs to the succinate/malate CoA ligase beta subunit family. As to quaternary structure, heterotetramer of two alpha and two beta subunits. The cofactor is Mg(2+).

The catalysed reaction is succinate + ATP + CoA = succinyl-CoA + ADP + phosphate. It carries out the reaction GTP + succinate + CoA = succinyl-CoA + GDP + phosphate. The protein operates within carbohydrate metabolism; tricarboxylic acid cycle; succinate from succinyl-CoA (ligase route): step 1/1. Functionally, succinyl-CoA synthetase functions in the citric acid cycle (TCA), coupling the hydrolysis of succinyl-CoA to the synthesis of either ATP or GTP and thus represents the only step of substrate-level phosphorylation in the TCA. The beta subunit provides nucleotide specificity of the enzyme and binds the substrate succinate, while the binding sites for coenzyme A and phosphate are found in the alpha subunit. This chain is Succinate--CoA ligase [ADP-forming] subunit beta, found in Cereibacter sphaeroides (strain ATCC 17025 / ATH 2.4.3) (Rhodobacter sphaeroides).